The following is a 206-amino-acid chain: Ras-related protein RABG3d (206 aa).

15–22 (GDSGVGKT) contributes to the GTP binding site. The Effector region motif lies at 37 to 45 (YKATIGADF). GTP-binding positions include 63–67 (DTAGQ), 125–128 (NKTD), and 158–159 (SA). 2 S-geranylgeranyl cysteine lipidation sites follow: Cys-204 and Cys-206. Cys-206 carries the post-translational modification Cysteine methyl ester.

The protein belongs to the small GTPase superfamily. Rab family.

It is found in the cell membrane. Its function is as follows. Intracellular vesicle trafficking and protein transport. The protein is Ras-related protein RABG3d (RABG3D) of Arabidopsis thaliana (Mouse-ear cress).